Reading from the N-terminus, the 336-residue chain is Holliday junction branch migration complex subunit RuvB (336 aa).

The tract at residues 4–184 (ADRLISAGTT…FGIVQRLEFY (181 aa)) is large ATPase domain (RuvB-L). Residues I23, R24, G65, K68, T69, T70, 131–133 (EDY), R174, Y184, and R221 contribute to the ATP site. Residue T69 participates in Mg(2+) binding. Residues 185-255 (QVPDLQYIVS…IAAQALDMLN (71 aa)) form a small ATPAse domain (RuvB-S) region. The interval 258–336 (AEGFDYMDRK…HFGITPPEMP (79 aa)) is head domain (RuvB-H). The DNA site is built by R294, R313, and R318.

This sequence belongs to the RuvB family. Homohexamer. Forms an RuvA(8)-RuvB(12)-Holliday junction (HJ) complex. HJ DNA is sandwiched between 2 RuvA tetramers; dsDNA enters through RuvA and exits via RuvB. An RuvB hexamer assembles on each DNA strand where it exits the tetramer. Each RuvB hexamer is contacted by two RuvA subunits (via domain III) on 2 adjacent RuvB subunits; this complex drives branch migration. In the full resolvosome a probable DNA-RuvA(4)-RuvB(12)-RuvC(2) complex forms which resolves the HJ.

Its subcellular location is the cytoplasm. It catalyses the reaction ATP + H2O = ADP + phosphate + H(+). The RuvA-RuvB-RuvC complex processes Holliday junction (HJ) DNA during genetic recombination and DNA repair, while the RuvA-RuvB complex plays an important role in the rescue of blocked DNA replication forks via replication fork reversal (RFR). RuvA specifically binds to HJ cruciform DNA, conferring on it an open structure. The RuvB hexamer acts as an ATP-dependent pump, pulling dsDNA into and through the RuvAB complex. RuvB forms 2 homohexamers on either side of HJ DNA bound by 1 or 2 RuvA tetramers; 4 subunits per hexamer contact DNA at a time. Coordinated motions by a converter formed by DNA-disengaged RuvB subunits stimulates ATP hydrolysis and nucleotide exchange. Immobilization of the converter enables RuvB to convert the ATP-contained energy into a lever motion, pulling 2 nucleotides of DNA out of the RuvA tetramer per ATP hydrolyzed, thus driving DNA branch migration. The RuvB motors rotate together with the DNA substrate, which together with the progressing nucleotide cycle form the mechanistic basis for DNA recombination by continuous HJ branch migration. Branch migration allows RuvC to scan DNA until it finds its consensus sequence, where it cleaves and resolves cruciform DNA. This is Holliday junction branch migration complex subunit RuvB from Escherichia coli O17:K52:H18 (strain UMN026 / ExPEC).